The chain runs to 53 residues: Kunitz-type trypsin inhibitor alpha chain (53 aa).

The tract at residues 33–53 is disordered; sequence GWGLPRRTGDESCPLNVKAVR.

Belongs to the protease inhibitor I3 (leguminous Kunitz-type inhibitor) family. As to quaternary structure, heterodimer of an alpha and a beta chain linked by a disulfide bond.

Its function is as follows. Inhibits trypsin with a Ki of 0.25 uM. Inhibits the trypsin-like proteases in midguts of larval H.armigera, S.exigua, and P.rapae. The polypeptide is Kunitz-type trypsin inhibitor alpha chain (Albizia kalkora (Kalkora mimosa)).